The chain runs to 46 residues: MARYRRCRSRSRCRRRRRRCHRRRRRCCRRRRRRRACCRRYRCRRR.

Belongs to the protamine P1 family. Testis.

Its subcellular location is the nucleus. It is found in the chromosome. Protamines substitute for histones in the chromatin of sperm during the haploid phase of spermatogenesis. They compact sperm DNA into a highly condensed, stable and inactive complex. The chain is Sperm protamine P1 (PRM1) from Hypsugo savii (Savi's pipistrelle).